The primary structure comprises 148 residues: Large ribosomal subunit protein bL9 (148 aa).

Belongs to the bacterial ribosomal protein bL9 family.

Binds to the 23S rRNA. This Aeromonas salmonicida (strain A449) protein is Large ribosomal subunit protein bL9.